The following is a 147-amino-acid chain: Endoribonuclease YbeY (147 aa).

Residues H107, H111, and H117 each contribute to the Zn(2+) site.

The protein belongs to the endoribonuclease YbeY family. Zn(2+) is required as a cofactor.

The protein resides in the cytoplasm. Its function is as follows. Single strand-specific metallo-endoribonuclease involved in late-stage 70S ribosome quality control and in maturation of the 3' terminus of the 16S rRNA. This chain is Endoribonuclease YbeY, found in Solibacter usitatus (strain Ellin6076).